The chain runs to 307 residues: Ribosomal protein L11 methyltransferase (307 aa).

T162, G183, D205, and N244 together coordinate S-adenosyl-L-methionine.

The protein belongs to the methyltransferase superfamily. PrmA family.

The protein localises to the cytoplasm. It catalyses the reaction L-lysyl-[protein] + 3 S-adenosyl-L-methionine = N(6),N(6),N(6)-trimethyl-L-lysyl-[protein] + 3 S-adenosyl-L-homocysteine + 3 H(+). In terms of biological role, methylates ribosomal protein L11. The protein is Ribosomal protein L11 methyltransferase of Bordetella bronchiseptica (strain ATCC BAA-588 / NCTC 13252 / RB50) (Alcaligenes bronchisepticus).